Here is a 133-residue protein sequence, read N- to C-terminus: Small ribosomal subunit protein uS9 (133 aa).

Residues 101 to 133 (MKPKGLLTRDPREVERKKYGLKKARRAPQFSKR) form a disordered region. Basic and acidic residues predominate over residues 107–118 (LTRDPREVERKK). The span at 119–133 (YGLKKARRAPQFSKR) shows a compositional bias: basic residues.

Belongs to the universal ribosomal protein uS9 family.

This chain is Small ribosomal subunit protein uS9, found in Deinococcus radiodurans (strain ATCC 13939 / DSM 20539 / JCM 16871 / CCUG 27074 / LMG 4051 / NBRC 15346 / NCIMB 9279 / VKM B-1422 / R1).